We begin with the raw amino-acid sequence, 247 residues long: uncharacterized protein (247 aa).

Positions 1–35 (MWGPGVTAEGLSVAPAPPPLLPLLLLLALALVAPS) are cleaved as a signal peptide. The chain crosses the membrane as a helical span at residues 82 to 102 (LSGLLILLVLFAIGYFLQRII). The disordered stretch occupies residues 109–176 (YPRGQARPGQ…RGSGGRLPPS (68 aa)). Over residues 111-120 (RGQARPGQAR) the composition is skewed to low complexity. Positions 161–171 (SGGGRGRGSGG) are enriched in gly residues.

It is found in the membrane. This is an uncharacterized protein from Mus musculus (Mouse).